Here is a 641-residue protein sequence, read N- to C-terminus: Chaperone protein DnaK (641 aa).

At Thr-199 the chain carries Phosphothreonine; by autocatalysis. A compositionally biased stretch (polar residues) spans 603-613; that stretch reads YTQQGGTAGSE. The disordered stretch occupies residues 603–641; sequence YTQQGGTAGSETHSHEKAGGSGGDDVVDAEFEEVRDDKR. Residues 627–641 show a composition bias toward acidic residues; the sequence is DVVDAEFEEVRDDKR.

Belongs to the heat shock protein 70 family.

Functionally, acts as a chaperone. This is Chaperone protein DnaK from Methylococcus capsulatus (strain ATCC 33009 / NCIMB 11132 / Bath).